A 586-amino-acid polypeptide reads, in one-letter code: Kinesin-like protein KIF25 (586 aa).

Positions 10 to 94 (SFWEQRTRQL…VIQKLNQDIQ (85 aa)) form a coiled coil. The Kinesin motor domain maps to 173–565 (NIRVHCRIRP…LGFGIRARQV (393 aa)). 267–274 (GQTGSGKS) is a binding site for ATP. Disordered regions lie at residues 417-460 (TADQ…AGRA) and 564-586 (QVQRGPARKRPPSSQMEGKRRPD).

It belongs to the TRAFAC class myosin-kinesin ATPase superfamily. Kinesin family. In terms of assembly, homotetramer.

It localises to the cytoplasm. It is found in the cytoskeleton. Its subcellular location is the microtubule organizing center. The protein resides in the centrosome. Functionally, minus-end microtubule-dependent motor protein. Acts as a negative regulator of centrosome separation required to prevent premature centrosome separation during interphase. Required to maintain a centered nucleus to ensure that the spindle is stably oriented at the onset of mitosis. May also act as a negative regulator of amino acid starvation-induced autophagy. The polypeptide is Kinesin-like protein KIF25 (Macaca fascicularis (Crab-eating macaque)).